Consider the following 508-residue polypeptide: MKLYSLLSVFLVILLATSDSDAFTRNNFPKDFLFGAATSAYQWEGAVAEDGRTPSVWDTFSHTYNRGNLGNGDITSDGYHKYKEDVKLMAEMGLESFRFSISWSRLIPNGRGLINPKGLLFYKNLIKELISHGIEPHVTLYHYDLPQSLEDEYGGWINRKIIEDFTAYADVCFREFGEDVKLWTTINEATIFAIGSYDQGISPPGHCSPNKFINCTSGNSSTEPYLAGHNILLAHASASKLYKLKYKSTQKGSIGLSIFAFGLSPYTNSKDDEIATQRAKAFFYGWMLKPLVFGDYPDEMKRTVGSRLPVFSEEESEQLKGSSDFIGIIHYTTFYVTNKPSPSIFPSMNEGFFKDMGVYMISAANSSFLLWEATPWGLEGILEYIKQSYNNPPIYILENGMPMGRDSTLQDTQRIEFIQAYIGAMLNAIKNGSDTRGYFVWSMIDLYELLSGYTTSFGMYYVNFSDPGRKRTPKLSASWYTGFLNGTIDVATQDTIQLQSNISGSSSL.

Positions 1–22 (MKLYSLLSVFLVILLATSDSDA) are cleaved as a signal peptide. A beta-D-glucoside is bound by residues glutamine 42, histidine 142, and 187-188 (NE). Catalysis depends on glutamate 188, which acts as the Proton donor. Cysteine 207 and cysteine 215 form a disulfide bridge. N-linked (GlcNAc...) asparagine glycans are attached at residues asparagine 214 and asparagine 219. Residue tyrosine 331 coordinates a beta-D-glucoside. Asparagine 365 carries an N-linked (GlcNAc...) asparagine glycan. Position 398 (glutamate 398) interacts with a beta-D-glucoside. Residue glutamate 398 is the Nucleophile of the active site. Asparagine 431 carries an N-linked (GlcNAc...) asparagine glycan. Residues tryptophan 441 and phenylalanine 457 each coordinate a beta-D-glucoside. N-linked (GlcNAc...) asparagine glycans are attached at residues asparagine 463, asparagine 485, and asparagine 501.

This sequence belongs to the glycosyl hydrolase 1 family.

It catalyses the reaction Hydrolysis of terminal, non-reducing beta-D-glucosyl residues with release of beta-D-glucose.. The sequence is that of Beta-glucosidase 10 from Arabidopsis thaliana (Mouse-ear cress).